The chain runs to 296 residues: Ribosomal RNA small subunit methyltransferase A (296 aa).

S-adenosyl-L-methionine-binding residues include Asn30, Leu32, Gly57, Glu78, Asp103, and Asn128.

Belongs to the class I-like SAM-binding methyltransferase superfamily. rRNA adenine N(6)-methyltransferase family. RsmA subfamily.

Its subcellular location is the cytoplasm. The enzyme catalyses adenosine(1518)/adenosine(1519) in 16S rRNA + 4 S-adenosyl-L-methionine = N(6)-dimethyladenosine(1518)/N(6)-dimethyladenosine(1519) in 16S rRNA + 4 S-adenosyl-L-homocysteine + 4 H(+). Specifically dimethylates two adjacent adenosines (A1518 and A1519) in the loop of a conserved hairpin near the 3'-end of 16S rRNA in the 30S particle. May play a critical role in biogenesis of 30S subunits. The sequence is that of Ribosomal RNA small subunit methyltransferase A from Staphylococcus haemolyticus (strain JCSC1435).